Consider the following 460-residue polypeptide: ATP synthase subunit beta (460 aa).

150–157 (GGAGVGKT) contributes to the ATP binding site.

The protein belongs to the ATPase alpha/beta chains family. As to quaternary structure, F-type ATPases have 2 components, CF(1) - the catalytic core - and CF(0) - the membrane proton channel. CF(1) has five subunits: alpha(3), beta(3), gamma(1), delta(1), epsilon(1). CF(0) has three main subunits: a(1), b(2) and c(9-12). The alpha and beta chains form an alternating ring which encloses part of the gamma chain. CF(1) is attached to CF(0) by a central stalk formed by the gamma and epsilon chains, while a peripheral stalk is formed by the delta and b chains.

The protein localises to the cell inner membrane. It carries out the reaction ATP + H2O + 4 H(+)(in) = ADP + phosphate + 5 H(+)(out). Functionally, produces ATP from ADP in the presence of a proton gradient across the membrane. The catalytic sites are hosted primarily by the beta subunits. This chain is ATP synthase subunit beta, found in Citrobacter koseri (strain ATCC BAA-895 / CDC 4225-83 / SGSC4696).